The following is a 407-amino-acid chain: Na(+)-translocating NADH-quinone reductase subunit F (407 aa).

A helical transmembrane segment spans residues 4–24; sequence IILGVFFFTAIVVALVFVILG. The 93-residue stretch at 33–125 folds into the 2Fe-2S ferredoxin-type domain; sequence GNVEVLINGE…NMKIHVHEEV (93 aa). 4 residues coordinate [2Fe-2S] cluster: Cys-68, Cys-74, Cys-77, and Cys-109. The FAD-binding FR-type domain occupies 128–269; sequence VKKWECTVRS…SGPFGEFFAR (142 aa).

It belongs to the NqrF family. Composed of six subunits; NqrA, NqrB, NqrC, NqrD, NqrE and NqrF. [2Fe-2S] cluster is required as a cofactor. Requires FAD as cofactor.

The protein localises to the cell inner membrane. The enzyme catalyses a ubiquinone + n Na(+)(in) + NADH + H(+) = a ubiquinol + n Na(+)(out) + NAD(+). In terms of biological role, NQR complex catalyzes the reduction of ubiquinone-1 to ubiquinol by two successive reactions, coupled with the transport of Na(+) ions from the cytoplasm to the periplasm. The first step is catalyzed by NqrF, which accepts electrons from NADH and reduces ubiquinone-1 to ubisemiquinone by a one-electron transfer pathway. This Methylococcus capsulatus (strain ATCC 33009 / NCIMB 11132 / Bath) protein is Na(+)-translocating NADH-quinone reductase subunit F.